The following is a 323-amino-acid chain: MKTTFLDFEQPIAELEAKIEELRFVQDDSVVDISEEIERLSKKSQQLTKDLYAHLTPWQVSQIARHPQRPYTLDYVSELFTDFHELHGDRAFADDLSIVGGLARFNGHACMVIGHQKGRDTKERAARNFGMPRPEGYRKAERLMRVAEKFGLPIFTFIDTPGAYPGVGAEERGQSEAIGHNLYVMAELKTPIIATVIGEGGSGGALAIAVADTVMMLQFSTYSVISPEGCASILWKSAAKAPEAAEALGLTAHRLKALGLIDKIVNEPLGGAHRDPKGTAALLRRALGDSLRQFQGMSVDALRERRFERLMAYGKYKETTARA.

In terms of domain architecture, CoA carboxyltransferase C-terminal spans 39 to 293; it reads RLSKKSQQLT…RRALGDSLRQ (255 aa).

This sequence belongs to the AccA family. Acetyl-CoA carboxylase is a heterohexamer composed of biotin carboxyl carrier protein (AccB), biotin carboxylase (AccC) and two subunits each of ACCase subunit alpha (AccA) and ACCase subunit beta (AccD).

The protein localises to the cytoplasm. The enzyme catalyses N(6)-carboxybiotinyl-L-lysyl-[protein] + acetyl-CoA = N(6)-biotinyl-L-lysyl-[protein] + malonyl-CoA. The protein operates within lipid metabolism; malonyl-CoA biosynthesis; malonyl-CoA from acetyl-CoA: step 1/1. In terms of biological role, component of the acetyl coenzyme A carboxylase (ACC) complex. First, biotin carboxylase catalyzes the carboxylation of biotin on its carrier protein (BCCP) and then the CO(2) group is transferred by the carboxyltransferase to acetyl-CoA to form malonyl-CoA. Its function is as follows. Does not confer resistance to the endogenous polyketide antibiotic thailandamide, does not confer resistance to thailandamide when expressed in S.typhimurium. This is Acetyl-coenzyme A carboxylase carboxyl transferase subunit alpha 1 from Burkholderia thailandensis (strain ATCC 700388 / DSM 13276 / CCUG 48851 / CIP 106301 / E264).